Consider the following 1132-residue polypeptide: Major DNA-binding protein (1132 aa).

The segment at 1103–1132 (VEELFPSPGVPSLTVGKKRKIASLLSDLDL) is required for nuclear localization.

It belongs to the herpesviridae major DNA-binding protein family. As to quaternary structure, homooligomers. Forms double-helical filaments necessary for the formation of replication compartments within the host nucleus. Interacts with the origin-binding protein. Interacts with the helicase primase complex; this interaction stimulates primer synthesis activity of the helicase-primase complex. Interacts with the DNA polymerase. Interacts with the alkaline exonuclease; this interaction increases its nuclease processivity.

The protein localises to the host nucleus. Plays several crucial roles in viral infection. Participates in the opening of the viral DNA origin to initiate replication by interacting with the origin-binding protein. May disrupt loops, hairpins and other secondary structures present on ssDNA to reduce and eliminate pausing of viral DNA polymerase at specific sites during elongation. Promotes viral DNA recombination by performing strand-transfer, characterized by the ability to transfer a DNA strand from a linear duplex to a complementary single-stranded DNA circle. Can also catalyze the renaturation of complementary single strands. Additionally, reorganizes the host cell nucleus, leading to the formation of prereplicative sites and replication compartments. This process is driven by the protein which can form double-helical filaments in the absence of DNA. The sequence is that of Major DNA-binding protein from Human herpesvirus 8 type P (isolate GK18) (HHV-8).